The chain runs to 203 residues: Adenosylcobalamin/alpha-ribazole phosphatase (203 aa).

H8 (tele-phosphohistidine intermediate) is an active-site residue. The active-site Proton donor/acceptor is E81.

Belongs to the phosphoglycerate mutase family.

The catalysed reaction is adenosylcob(III)alamin 5'-phosphate + H2O = adenosylcob(III)alamin + phosphate. It catalyses the reaction alpha-ribazole 5'-phosphate + H2O = alpha-ribazole + phosphate. It participates in nucleoside biosynthesis; alpha-ribazole biosynthesis; alpha-ribazole from 5,6-dimethylbenzimidazole: step 2/2. Functionally, catalyzes the conversion of adenosylcobalamin 5'-phosphate to adenosylcobalamin (vitamin B12); involved in the assembly of the nucleotide loop of cobalamin. Also catalyzes the hydrolysis of the phospho group from alpha-ribazole 5'-phosphate to form alpha-ribazole. The sequence is that of Adenosylcobalamin/alpha-ribazole phosphatase (cobC) from Escherichia coli (strain K12).